The following is a 1582-amino-acid chain: SET-binding protein (1582 aa).

4 disordered regions span residues 1–76 (MEPR…WVAG), 124–246 (ITIK…KVPA), 278–416 (LLGS…KRQS), and 446–513 (SNSE…KLSE). The span at 18–27 (EFLQGSSSRS) shows a compositional bias: polar residues. A compositionally biased stretch (basic and acidic residues) spans 57–74 (GSGRDVDCNSNADSEKWV). Polar residues-rich tracts occupy residues 126-141 (IKQS…GKNS) and 213-229 (MEWS…QNCF). The span at 278–298 (LLGSVVPSPSSHNSPATPSSS) shows a compositional bias: low complexity. The segment covering 356-365 (ETTEGKREAY) has biased composition (basic and acidic residues). The span at 368-388 (DSAQEASPARQSISSVSNPEN) shows a compositional bias: polar residues. Residues 450-465 (GSKKDPRVPKLGKMIE) are compositionally biased toward basic and acidic residues. Residues 575-587 (KKKRGRPKKQPLL) constitute a DNA-binding region (a.T hook 1). Disordered regions lie at residues 595 to 617 (GTST…RKRR) and 709 to 787 (RGTI…ASTE). Positions 770 to 787 (LSTQLGGSNGNLSPASTE) are enriched in polar residues. K808 carries the N6-acetyllysine modification. Residues 845–871 (SPVSESHSEETIPSDSGIGTDNNSTSD) show a composition bias toward polar residues. The disordered stretch occupies residues 845–880 (SPVSESHSEETIPSDSGIGTDNNSTSDQAEKSSESR). The segment at residues 1007 to 1019 (KKKRGRPAKTNDT) is a DNA-binding region (a.T hook 2). 6 disordered regions span residues 1128-1155 (VGGA…DRIL), 1182-1215 (SGSD…VSKN), 1236-1265 (AKDK…TRSE), 1429-1461 (QRQS…RDQM), 1470-1489 (LPSK…EPAS), and 1507-1582 (EAPP…DVLP). Basic residues predominate over residues 1137–1150 (RLHKRKHKHKRKHK). The segment covering 1182-1196 (SGSDKELPLVSEKSK) has biased composition (basic and acidic residues). Residues 1439–1448 (VKKRRGRPRK) show a composition bias toward basic residues. The a.T hook 3 DNA-binding region spans 1440-1452 (KKRRGRPRKQPSQ). 2 stretches are compositionally biased toward pro residues: residues 1509–1533 (PPLP…PPLP) and 1546–1559 (QPPA…PQPL).

In terms of assembly, interacts with SET.

It localises to the nucleus. This Mus musculus (Mouse) protein is SET-binding protein (Setbp1).